A 138-amino-acid polypeptide reads, in one-letter code: Fusaristatin A biosynthesis cluster protein FGSG_08206 (138 aa).

The 98-residue stretch at 33-130 (VHRVTMFKMP…TIDGMMTVFF (98 aa)) folds into the Stress-response A/B barrel domain.

Its pathway is secondary metabolite biosynthesis. Functionally, part of the gene cluster that mediates the biosynthesis of the lipopeptide fusaristatin A. Fusaristatin A consists of a polyketide chain linked to three amino acid residues glutamine (Gln), dehydroalanine (dehydro-Ala), and beta-aminoisobutyric acid. The biosynthesis starts with formation of a linear polyketide chain by the highly reducing polyketide synthase PKS6. The gene cluster does not contain an acyl-CoA ligase or an acyl-transferase, and it is therefore predicted that the polyketide is transferred directly to the nonribosomal peptide synthetase NRPS7. Modules 1-3 from NRPS7 incorporate dehydro-Ala, Gln, and beta-aminoisobutyric acid in the compound, which is released by cyclization. The beta-aminoisobutyric acid units are most likely not freely available to the NRPS, but can be synthesized from thymine, which requires a dehydrogenase, a monooxygenase, and an aminotransferase. The fusaristatin A cluster contains a cytochrome P450 monooxygenase (FGSG_08207) and an aminotransferase (FGSG_17085), which theoretically can perform two of the enzymatic steps. The enzymes may however also be involved in biosynthesis of dehydroalanine or modification of the polyketide. The dehydro-Ala residue can be a result of cyclization, where serine is dehydrated. The last gene of the cluster encodes a protein with an A/B barrel domain found in variable enzymes, which hampers functional prediction. The polypeptide is Fusaristatin A biosynthesis cluster protein FGSG_08206 (Gibberella zeae (strain ATCC MYA-4620 / CBS 123657 / FGSC 9075 / NRRL 31084 / PH-1) (Wheat head blight fungus)).